The chain runs to 136 residues: T-cell receptor beta chain V region LB2 (136 aa).

Positions 1–21 (MNKWVFCWVTLCLLTVETTHG) are cleaved as a signal peptide. Residues 22 to 116 (DGGIITQTPK…EMTVFLCASS (95 aa)) are v segment. Residues C45 and C113 are joined by a disulfide bond. The interval 117–120 (IRLA) is d segment. The tract at residues 121 to 136 (SAETLYFGSGTRLTVL) is j segment.

This chain is T-cell receptor beta chain V region LB2, found in Mus musculus (Mouse).